We begin with the raw amino-acid sequence, 447 residues long: Tubulin beta-1 chain (447 aa).

Residues Q11, E69, S138, G142, T143, G144, N204, and N226 each contribute to the GTP site. E69 contributes to the Mg(2+) binding site. The interval 424-447 is disordered; that stretch reads QYQDATAEEEGEGDEEEAEGEAAA. Acidic residues predominate over residues 429–447; sequence TAEEEGEGDEEEAEGEAAA.

Belongs to the tubulin family. As to quaternary structure, dimer of alpha and beta chains. A typical microtubule is a hollow water-filled tube with an outer diameter of 25 nm and an inner diameter of 15 nM. Alpha-beta heterodimers associate head-to-tail to form protofilaments running lengthwise along the microtubule wall with the beta-tubulin subunit facing the microtubule plus end conferring a structural polarity. Microtubules usually have 13 protofilaments but different protofilament numbers can be found in some organisms and specialized cells. Requires Mg(2+) as cofactor.

The protein resides in the cytoplasm. The protein localises to the cytoskeleton. Its function is as follows. Tubulin is the major constituent of microtubules, a cylinder consisting of laterally associated linear protofilaments composed of alpha- and beta-tubulin heterodimers. Microtubules grow by the addition of GTP-tubulin dimers to the microtubule end, where a stabilizing cap forms. Below the cap, tubulin dimers are in GDP-bound state, owing to GTPase activity of alpha-tubulin. In Cyanophora paradoxa, this protein is Tubulin beta-1 chain (TUBB1).